An 83-amino-acid chain; its full sequence is Protein ShK-like4 (83 aa).

Positions 1–21 (MDTRVIAVLFVAIMVLSSTNA) are cleaved as a signal peptide. A propeptide spanning residues 22–48 (LPKQKGSYKNMNHADFLKGLDRASSKR) is cleaved from the precursor. Cystine bridges form between Cys-50–Cys-82, Cys-57–Cys-75, and Cys-67–Cys-79. Residues 50–83 (CRDSHWSCFFQSNYEDICSTAQAEECALSCGLCE) enclose the ShKT domain.

Post-translationally, contains 3 disulfide bonds. Expressed in various neurons (ectodermal sensory cells) (in planulae and primary polyps). Not expressed in nematocytes.

Probable neuropeptide. This is Protein ShK-like4 from Nematostella vectensis (Starlet sea anemone).